The chain runs to 172 residues: 3-hydroxydecanoyl-[acyl-carrier-protein] dehydratase (172 aa).

His71 is a catalytic residue.

The protein belongs to the thioester dehydratase family. FabA subfamily. As to quaternary structure, homodimer.

It is found in the cytoplasm. The catalysed reaction is a (3R)-hydroxyacyl-[ACP] = a (2E)-enoyl-[ACP] + H2O. It catalyses the reaction (3R)-hydroxydecanoyl-[ACP] = (2E)-decenoyl-[ACP] + H2O. The enzyme catalyses (2E)-decenoyl-[ACP] = (3Z)-decenoyl-[ACP]. It functions in the pathway lipid metabolism; fatty acid biosynthesis. Its function is as follows. Necessary for the introduction of cis unsaturation into fatty acids. Catalyzes the dehydration of (3R)-3-hydroxydecanoyl-ACP to E-(2)-decenoyl-ACP and then its isomerization to Z-(3)-decenoyl-ACP. Can catalyze the dehydratase reaction for beta-hydroxyacyl-ACPs with saturated chain lengths up to 16:0, being most active on intermediate chain length. In Yersinia enterocolitica serotype O:8 / biotype 1B (strain NCTC 13174 / 8081), this protein is 3-hydroxydecanoyl-[acyl-carrier-protein] dehydratase.